A 347-amino-acid chain; its full sequence is Protein RecA (347 aa).

65–72 (GPESSGKT) is a binding site for ATP. The tract at residues 328–347 (SPAQPEAPAAGEKPEQEEEF) is disordered.

The protein belongs to the RecA family.

It localises to the cytoplasm. In terms of biological role, can catalyze the hydrolysis of ATP in the presence of single-stranded DNA, the ATP-dependent uptake of single-stranded DNA by duplex DNA, and the ATP-dependent hybridization of homologous single-stranded DNAs. It interacts with LexA causing its activation and leading to its autocatalytic cleavage. The polypeptide is Protein RecA (Vibrio parahaemolyticus serotype O3:K6 (strain RIMD 2210633)).